The sequence spans 657 residues: DNA mismatch repair protein MutL (657 aa).

The protein belongs to the DNA mismatch repair MutL/HexB family.

In terms of biological role, this protein is involved in the repair of mismatches in DNA. It is required for dam-dependent methyl-directed DNA mismatch repair. May act as a 'molecular matchmaker', a protein that promotes the formation of a stable complex between two or more DNA-binding proteins in an ATP-dependent manner without itself being part of a final effector complex. This is DNA mismatch repair protein MutL from Streptococcus agalactiae serotype III (strain NEM316).